Consider the following 517-residue polypeptide: Serine O-succinyltransferase (517 aa).

The N-terminal 46 residues, 1 to 46, are a transit peptide targeting the mitochondrion; sequence MSPLNGVARSLPRPFQAVARRPFRVAQPAVACPSNRRSFNHSRSLR. The tract at residues 34-66 is disordered; the sequence is SNRRSFNHSRSLRSTGSQSPAPSPRDSSNPALS. Residues 45–64 are compositionally biased toward polar residues; it reads LRSTGSQSPAPSPRDSSNPA. The AB hydrolase-1 domain occupies 134–386; that stretch reads NVILLHTGLS…LTQQLATKKQ (253 aa). The interval 141–144 is important for substrate specificity; sequence GLSA. S238 functions as the Nucleophile in the catalytic mechanism. R307 is a binding site for substrate. The tract at residues 413-436 is disordered; that stretch reads QPYQEQPSASTSAEQSASASETGS. Low complexity predominate over residues 416-436; the sequence is QEQPSASTSAEQSASASETGS. Active-site residues include D461 and H498. Position 499 (D499) interacts with substrate.

Belongs to the AB hydrolase superfamily. MetX family.

The protein localises to the mitochondrion. The enzyme catalyses succinyl-CoA + L-serine = O-succinyl-L-serine + CoA. It functions in the pathway amino-acid biosynthesis; L-cysteine biosynthesis; L-cysteine from L-serine: step 1/2. Functionally, transfers a succinyl group from succinyl-CoA to L-serine, forming succinyl-L-serine. Also has weak serine acetyl transferase activity and homoserine succinyl transferase activity. The protein is Serine O-succinyltransferase of Emericella nidulans (Aspergillus nidulans).